A 302-amino-acid chain; its full sequence is Large ribosomal subunit protein bL28m (302 aa).

It belongs to the bacterial ribosomal protein bL28 family. As to quaternary structure, component of the mitochondrial ribosome large subunit (39S) which comprises a 16S rRNA and about 50 distinct proteins.

The protein localises to the mitochondrion. The chain is Large ribosomal subunit protein bL28m (mRpL28) from Drosophila melanogaster (Fruit fly).